Here is a 209-residue protein sequence, read N- to C-terminus: Uracil phosphoribosyltransferase (209 aa).

5-phospho-alpha-D-ribose 1-diphosphate-binding positions include R79, R104, and 131–139 (DPMLATGGS). Uracil contacts are provided by residues I194 and 199 to 201 (GDA). 5-phospho-alpha-D-ribose 1-diphosphate is bound at residue D200.

This sequence belongs to the UPRTase family. The cofactor is Mg(2+).

It catalyses the reaction UMP + diphosphate = 5-phospho-alpha-D-ribose 1-diphosphate + uracil. It functions in the pathway pyrimidine metabolism; UMP biosynthesis via salvage pathway; UMP from uracil: step 1/1. With respect to regulation, allosterically activated by GTP. In terms of biological role, catalyzes the conversion of uracil and 5-phospho-alpha-D-ribose 1-diphosphate (PRPP) to UMP and diphosphate. The chain is Uracil phosphoribosyltransferase from Streptococcus pyogenes serotype M1.